The primary structure comprises 367 residues: Glutamate 5-kinase (367 aa).

Lysine 9 is a binding site for ATP. Substrate is bound by residues serine 49, aspartate 136, and asparagine 148. ATP contacts are provided by residues 168–169 (TD) and 210–216 (TGGMKSK). The 75-residue stretch at 276-350 (SGQIEVDAGA…GMQSQDIQVR (75 aa)) folds into the PUA domain.

This sequence belongs to the glutamate 5-kinase family.

It is found in the cytoplasm. It catalyses the reaction L-glutamate + ATP = L-glutamyl 5-phosphate + ADP. The protein operates within amino-acid biosynthesis; L-proline biosynthesis; L-glutamate 5-semialdehyde from L-glutamate: step 1/2. Functionally, catalyzes the transfer of a phosphate group to glutamate to form L-glutamate 5-phosphate. This Bacillus cereus (strain G9842) protein is Glutamate 5-kinase.